A 44-amino-acid chain; its full sequence is SPbeta prophage-derived uncharacterized protein YosI (44 aa).

This is SPbeta prophage-derived uncharacterized protein YosI (yosI) from Bacillus subtilis (strain 168).